The primary structure comprises 435 residues: Ribosomal protein uS12 methylthiotransferase RimO (435 aa).

Residues 3–113 form the MTTase N-terminal domain; it reads HKVGFVSLGC…VVNAVHQHLP (111 aa). C12, C48, C77, C144, C148, and C151 together coordinate [4Fe-4S] cluster. The Radical SAM core domain maps to 130–367; that stretch reads LTPRHYAYLK…MQVQAEISRN (238 aa). One can recognise a TRAM domain in the interval 370-435; it reads KNKIGSTQTV…DDYDLYASLV (66 aa).

Belongs to the methylthiotransferase family. RimO subfamily. [4Fe-4S] cluster serves as cofactor.

It is found in the cytoplasm. The catalysed reaction is L-aspartate(89)-[ribosomal protein uS12]-hydrogen + (sulfur carrier)-SH + AH2 + 2 S-adenosyl-L-methionine = 3-methylsulfanyl-L-aspartate(89)-[ribosomal protein uS12]-hydrogen + (sulfur carrier)-H + 5'-deoxyadenosine + L-methionine + A + S-adenosyl-L-homocysteine + 2 H(+). Functionally, catalyzes the methylthiolation of an aspartic acid residue of ribosomal protein uS12. The chain is Ribosomal protein uS12 methylthiotransferase RimO from Legionella pneumophila (strain Lens).